We begin with the raw amino-acid sequence, 138 residues long: Sporulation-specific protein 13 (138 aa).

The span at 1–11 shows a compositional bias: polar residues; it reads MMSNSQISKLF. The interval 1 to 31 is disordered; the sequence is MMSNSQISKLFSSISNKENSNENALKESTNK. Residues 12–23 show a composition bias toward low complexity; sequence SSISNKENSNEN. The stretch at 16-104 forms a coiled coil; it reads NKENSNENAL…KRELDYLRAK (89 aa).

As to quaternary structure, interacts with spo2.

It is found in the cytoplasm. The protein localises to the cytoskeleton. The protein resides in the microtubule organizing center. Its subcellular location is the spindle pole body. Functionally, involved in sporulation. Plays a significant role in modification of the spindle pole body prior to spore formation and is required for initiating forespore membrane formation. The sequence is that of Sporulation-specific protein 13 (spo13) from Schizosaccharomyces pombe (strain 972 / ATCC 24843) (Fission yeast).